The sequence spans 261 residues: RNA-binding protein 1 (261 aa).

Disordered regions lie at residues 1–38 and 232–261; these read MADG…SGNE and QFSR…RGRR. One can recognise an RRM domain in the interval 151–236; it reads PTLYIEGLPS…SHLRLQFSRY (86 aa). A compositionally biased stretch (gly residues) spans 240–254; it reads RSGGGPRSSGPPRGG.

As to expression, ubiquitous.

The protein resides in the nucleus speckle. Its subcellular location is the cytoplasmic granule. In terms of biological role, RNA-binding protein interacting with the enod40 RNA. The protein is RNA-binding protein 1 of Medicago truncatula (Barrel medic).